The sequence spans 286 residues: MRLLPRLLLLFLLAFPAAVLLRGGPGGSLALAQDPTEDEEIVEDSIIEDEDDEAEVEEDEPTDLAEDKEEEDVSSEPEASPSADTTILFVKGEDFPANNIVKFLVGFTNKGTEDFIVESLDASFRYPQDYQFYIQNFTALPLNTVVPPQRQATFEYSFIPAEPMGGRPFGLVINLNYKDLNGNVFQDAVFNQTVTVIEREDGLDGETIFMYMFLAGLGLLVVVGLHQLLESRKRKRPIQKVEMGTSSQNDVDMSWIPQETLNQINKASPRRQPRKRAQKRSVGSDE.

The first 21 residues, 1 to 21, serve as a signal peptide directing secretion; it reads MRLLPRLLLLFLLAFPAAVLL. At 22-207 the chain is on the lumenal side; sequence RGGPGGSLAL…EREDGLDGET (186 aa). The span at 46-75 shows a compositional bias: acidic residues; the sequence is IIEDEDDEAEVEEDEPTDLAEDKEEEDVSS. The tract at residues 46–83 is disordered; the sequence is IIEDEDDEAEVEEDEPTDLAEDKEEEDVSSEPEASPSA. 2 N-linked (GlcNAc...) asparagine glycosylation sites follow: asparagine 136 and asparagine 191. Residues 208–228 form a helical membrane-spanning segment; that stretch reads IFMYMFLAGLGLLVVVGLHQL. The Cytoplasmic segment spans residues 229–286; that stretch reads LESRKRKRPIQKVEMGTSSQNDVDMSWIPQETLNQINKASPRRQPRKRAQKRSVGSDE. The tract at residues 236–286 is disordered; the sequence is RPIQKVEMGTSSQNDVDMSWIPQETLNQINKASPRRQPRKRAQKRSVGSDE. Residues 244–266 show a composition bias toward polar residues; that stretch reads GTSSQNDVDMSWIPQETLNQINK. Serine 247 is modified (phosphoserine). Threonine 260 is subject to Phosphothreonine. The residue at position 268 (serine 268) is a Phosphoserine. Over residues 268-279 the composition is skewed to basic residues; the sequence is SPRRQPRKRAQK.

The protein belongs to the TRAP-alpha family. As to quaternary structure, heterotetramer of TRAP-alpha, TRAP-beta, TRAP-delta and TRAP-gamma. Interacts with palmitoylated calnexin (CALX), the interaction is required for efficient folding of glycosylated proteins.

The protein resides in the endoplasmic reticulum membrane. Its function is as follows. TRAP proteins are part of a complex whose function is to bind calcium to the ER membrane and thereby regulate the retention of ER resident proteins. May be involved in the recycling of the translocation apparatus after completion of the translocation process or may function as a membrane-bound chaperone facilitating folding of translocated proteins. The chain is Translocon-associated protein subunit alpha (Ssr1) from Mus musculus (Mouse).